Here is a 688-residue protein sequence, read N- to C-terminus: MIOREX complex component 1 (688 aa).

The tract at residues 1–24 (MGLKITKGQLRTKDLNQSSSKSSQ) is disordered. A mitochondrion-targeting transit peptide spans 1–46 (MGLKITKGQLRTKDLNQSSSKSSQSSRIGVDTCIFTRMLPRINTAI).

Associates with the mitochondrial ribosome.

Its subcellular location is the mitochondrion. Component of MIOREX complexes, large expressome-like assemblies of ribosomes with factors involved in all the steps of post-transcriptional gene expression. The protein is MIOREX complex component 1 of Saccharomyces cerevisiae (strain ATCC 204508 / S288c) (Baker's yeast).